The sequence spans 107 residues: uncharacterized protein (107 aa).

Positions 13–68 (LQEEFLEPLSLKISDLAQILDVHRNTASNIVNNSSRITLEMAVKLAKVFDTTPEFW) constitute an HTH cro/C1-type domain. A DNA-binding region (H-T-H motif) is located at residues 24 to 43 (KISDLAQILDVHRNTASNIV).

Belongs to the VapA/VapI family.

This is an uncharacterized protein from Haemophilus influenzae (strain ATCC 51907 / DSM 11121 / KW20 / Rd).